Here is a 218-residue protein sequence, read N- to C-terminus: Protease PrsW (218 aa).

The helical transmembrane segment at methionine 1–aspartate 23 threads the bilayer. At glutamine 24 to valine 30 the chain is on the cytoplasmic side. The helical transmembrane segment at histidine 31–valine 53 threads the bilayer. Residues leucine 54 to aspartate 98 lie on the Extracellular side of the membrane. Residues glycine 99–glycine 121 traverse the membrane as a helical segment. At histidine 122–valine 129 the chain is on the cytoplasmic side. The helical transmembrane segment at arginine 130–lysine 151 threads the bilayer. The Extracellular segment spans residues alanine 152–phenylalanine 180. A helical transmembrane segment spans residues isoleucine 181 to glycine 203. Residues leucine 204–valine 218 lie on the Cytoplasmic side of the membrane.

This sequence belongs to the protease PrsW family.

It localises to the cell membrane. In terms of biological role, involved in the degradation of anti-sigma-W factor RsiW. Responsible for Site-1 cleavage of the RsiW anti-sigma factor. This results, after two other proteolytic steps catalyzed by the RasP and ClpXP proteases, in the release of SigW and the transcription activation of the genes under the control of the sigma-W factor. Seems to be responsible for sensing antimicrobial peptides that damage the cell membrane and other agents that cause cell envelope stress. Therefore it is a protease governing regulated intramembrane proteolysis and resistance to antimicrobial peptides in B.subtilis. The polypeptide is Protease PrsW (Bacillus subtilis (strain 168)).